We begin with the raw amino-acid sequence, 83 residues long: Hainantoxin-III 7 (83 aa).

The N-terminal stretch at 1–21 (MKASMFLALAGLVLLFVVGYA) is a signal peptide. Residues 22-48 (SESEEKEFPRELLSKVFAVDDFKGEER) constitute a propeptide that is removed on maturation. Disulfide bonds link cysteine 50/cysteine 65, cysteine 57/cysteine 70, and cysteine 64/cysteine 77. Position 81 is a leucine amide (leucine 81).

The protein belongs to the neurotoxin 10 (Hwtx-1) family. 15 (Hntx-3) subfamily. As to quaternary structure, monomer. As to expression, expressed by the venom gland.

Its subcellular location is the secreted. In terms of biological role, selective antagonist of neuronal tetrodotoxin (TTX)-sensitive voltage-gated sodium channels (IC(50)=1270 nM on Nav1.1/SCN1A, 270 nM on Nav1.2/SCN2A, 491 nM on Nav1.3/SCN3A and 232 nM on Nav1.7/SCN9A). This toxin suppress Nav1.7 current amplitude without significantly altering the activation, inactivation, and repriming kinetics. Short extreme depolarizations partially activate the toxin-bound channel, indicating voltage-dependent inhibition of this toxin. This toxin increases the deactivation of the Nav1.7 current after extreme depolarizations. The toxin-Nav1.7 complex is gradually dissociated upon prolonged strong depolarizations in a voltage-dependent manner, and the unbound toxin rebinds to Nav1.7 after a long repolarization. Moreover, analysis of chimeric channels showed that the DIIS3-S4 linker is critical for toxin binding to Nav1.7. These data are consistent with this toxin interacting with Nav1.7 site 4 and trapping the domain II voltage sensor in the closed state. This chain is Hainantoxin-III 7, found in Cyriopagopus hainanus (Chinese bird spider).